Here is a 79-residue protein sequence, read N- to C-terminus: Sec-independent protein translocase protein TatA (79 aa).

The chain crosses the membrane as a helical span at residues Met1–Phe21. Residues Glu48–Ser79 are disordered. Over residues Lys66–Ser79 the composition is skewed to basic and acidic residues.

The protein belongs to the TatA/E family. In terms of assembly, the Tat system comprises two distinct complexes: a TatABC complex, containing multiple copies of TatA, TatB and TatC subunits, and a separate TatA complex, containing only TatA subunits. Substrates initially bind to the TatABC complex, which probably triggers association of the separate TatA complex to form the active translocon.

The protein localises to the cell inner membrane. Part of the twin-arginine translocation (Tat) system that transports large folded proteins containing a characteristic twin-arginine motif in their signal peptide across membranes. TatA could form the protein-conducting channel of the Tat system. The polypeptide is Sec-independent protein translocase protein TatA (Helicobacter pylori (strain P12)).